We begin with the raw amino-acid sequence, 431 residues long: Serine hydroxymethyltransferase (431 aa).

(6S)-5,6,7,8-tetrahydrofolate is bound by residues Leu121 and 125–127; that span reads GHL. Lys230 carries the N6-(pyridoxal phosphate)lysine modification. 369–371 provides a ligand contact to (6S)-5,6,7,8-tetrahydrofolate; sequence SPF.

Belongs to the SHMT family. Homodimer. Pyridoxal 5'-phosphate is required as a cofactor.

The protein localises to the cytoplasm. The enzyme catalyses (6R)-5,10-methylene-5,6,7,8-tetrahydrofolate + glycine + H2O = (6S)-5,6,7,8-tetrahydrofolate + L-serine. Its pathway is one-carbon metabolism; tetrahydrofolate interconversion. The protein operates within amino-acid biosynthesis; glycine biosynthesis; glycine from L-serine: step 1/1. Catalyzes the reversible interconversion of serine and glycine with tetrahydrofolate (THF) serving as the one-carbon carrier. This reaction serves as the major source of one-carbon groups required for the biosynthesis of purines, thymidylate, methionine, and other important biomolecules. Also exhibits THF-independent aldolase activity toward beta-hydroxyamino acids, producing glycine and aldehydes, via a retro-aldol mechanism. This is Serine hydroxymethyltransferase from Cytophaga hutchinsonii (strain ATCC 33406 / DSM 1761 / CIP 103989 / NBRC 15051 / NCIMB 9469 / D465).